We begin with the raw amino-acid sequence, 316 residues long: Aquaglyceroporin-2 (316 aa).

The disordered stretch occupies residues 1–31 (MADERGPINKSGPSSTYGATENNGESGGTRG). The Cytoplasmic portion of the chain corresponds to 1-59 (MADERGPINKSGPSSTYGATENNGESGGTRGAPATEDVIVIQDSGWYYIKFRFKEPFAE). Residues 11 to 24 (SGPSSTYGATENNG) are compositionally biased toward polar residues. A helical membrane pass occupies residues 60–80 (FLGTFILVAFGVGAIAQTVLS). Topologically, residues 81-86 (KGATGN) are extracellular. A helical transmembrane segment spans residues 87–107 (WITIALGFGLGLALGIAVSGH). Topologically, residues 108–131 (YSGGHLNPAVTITLAIYRKFPWVK) are cytoplasmic. Positions 114–116 (NPA) match the NPA 1 motif. A helical membrane pass occupies residues 132 to 152 (VPVYITAQVLGAFVAAAVIYL). Over 153–187 (NYLPAIYNFAGDKRDVIGANATAGIFATYPQPFMS) the chain is Extracellular. A glycan (N-linked (GlcNAc...) asparagine) is linked at Asn172. The helical transmembrane segment at 188–208 (IGGAFFSEALGTFFLLFVILA) threads the bilayer. At 209–219 (MTDERNVPTTR) the chain is on the cytoplasmic side. The chain crosses the membrane as a helical span at residues 220–240 (IVAPITIGLTLTAIAISLGFE). Residues 241 to 271 (TGFSLNAARDFGPRLFTFFIGYGVEVFTAYK) are Extracellular-facing. Residues 246-248 (NAA) carry the NPA 2 motif. A helical membrane pass occupies residues 272 to 292 (FYFWIPLVAPIVGGLVAGFVY). Residues 293–316 (DSLLYWGEKSFLNKNVHHEHRAVA) lie on the Cytoplasmic side of the membrane.

Belongs to the MIP/aquaporin (TC 1.A.8) family.

It is found in the cell membrane. Its subcellular location is the membrane. The enzyme catalyses H2O(in) = H2O(out). The catalysed reaction is glycerol(in) = glycerol(out). Its activity is regulated as follows. Polyethylene glycol (PEG) stimulates whereas glycerol inhibits the aquaporin activity. Water channel required to facilitate the transport of water across membranes. Stimulates plant drought tolerance by facilitating the transport of water from the arbuscular mycorrhiza fungus to host plants. This Rhizophagus irregularis (Arbuscular mycorrhizal fungus) protein is Aquaglyceroporin-2.